The following is a 1076-amino-acid chain: GPI inositol-deacylase A (1076 aa).

The helical transmembrane segment at 3 to 23 (IATFPALAITALALVLWATVA) threads the bilayer. Residues Asn-48 and Asn-119 are each glycosylated (N-linked (GlcNAc...) asparagine). Ser-240 is an active-site residue. N-linked (GlcNAc...) asparagine glycosylation is present at Asn-404. 2 helical membrane passes run 765–785 (FLGF…LCLL) and 815–835 (WILA…SLLY). N-linked (GlcNAc...) asparagine glycosylation occurs at Asn-849. 3 helical membrane-spanning segments follow: residues 855-875 (FLGP…HWLL), 877-897 (ILTL…IAPE), and 910-930 (FLLL…VAVL). N-linked (GlcNAc...) asparagine glycosylation is found at Asn-952 and Asn-966. Transmembrane regions (helical) follow at residues 970 to 990 (SLLL…VVWL), 1006 to 1026 (EVSA…GIMI), and 1035 to 1055 (IYAT…HGVV).

It belongs to the GPI inositol-deacylase family.

It is found in the endoplasmic reticulum membrane. In terms of biological role, involved in inositol deacylation of GPI-anchored proteins which plays important roles in the quality control and ER-associated degradation of GPI-anchored proteins. This Yarrowia lipolytica (strain CLIB 122 / E 150) (Yeast) protein is GPI inositol-deacylase A (BST1A).